A 298-amino-acid polypeptide reads, in one-letter code: Leucine-rich repeat-containing protein 55 (298 aa).

The N-terminal stretch at 1–34 (MGDTWAQLPWPGPPHSALLLVFFLLAAGVMHSDA) is a signal peptide. Residues 35-65 (GASCPVLCTCRNQVVDCSNQRLFSVPPDLPM) form the LRRNT domain. Intrachain disulfides connect Cys38–Cys44 and Cys42–Cys51. 5 LRR repeats span residues 66-87 (DTRN…YLTC), 90-111 (ELRV…LFLH), 114-135 (RLAH…MFRE), 138-160 (GLVH…AFQG), and 163-186 (HLRD…EGLP). An LRRCT domain is found at 196 to 251 (NPWVCGCTMEPLLKWLRNRIQRCTADSQLAECRGPPEVEGAPLFSLTEESFKACHL). Cystine bridges form between Cys200-Cys227 and Cys202-Cys249. The helical transmembrane segment at 259–279 (LFIAFVGFVVSIASVATNFLL) threads the bilayer.

As to quaternary structure, interacts with KCNMA1.

The protein resides in the cell membrane. Functionally, auxiliary protein of the large-conductance, voltage and calcium-activated potassium channel (BK alpha). Modulates gating properties by producing a marked shift in the BK channel's voltage dependence of activation in the hyperpolarizing direction, and in the absence of calcium. The sequence is that of Leucine-rich repeat-containing protein 55 (Lrrc55) from Rattus norvegicus (Rat).